The sequence spans 401 residues: Divinyl chlorophyllide a 8-vinyl-reductase, chloroplastic (401 aa).

Over residues 1 to 10 (MATILLSSRL) the composition is skewed to polar residues. Positions 1–26 (MATILLSSRLPTTGTATPSPTRPAPR) are disordered. The N-terminal 54 residues, 1–54 (MATILLSSRLPTTGTATPSPTRPAPRFLSFPGTAIRRRGRGPLLASSAVSPPAP), are a transit peptide targeting the chloroplast.

Its subcellular location is the plastid. The protein resides in the chloroplast. The catalysed reaction is protochlorophyllide a + NADP(+) = 3,8-divinyl protochlorophyllide a + NADPH + H(+). Its pathway is porphyrin-containing compound metabolism; chlorophyll biosynthesis. In terms of biological role, catalyzes the conversion of divinyl chlorophyllide to monovinyl chlorophyllide. Reduces the 8-vinyl group of the tetrapyrrole to an ethyl group using NADPH as the reductant. Can use (3,8-divinyl)-chlorophyllide a (DV-Chlidea) &gt; (3,8-divinyl)-chlorophyll a (DV-Chla) &gt; (3,8-divinyl)-protochlorophyllide a (DV-Pchlidea) &gt; (3,8-divinyl)-magnesium-protoporphyrin IX monomethyl ester (DV-MPE) &gt; (3,8-divinyl)-magnesium-protoporphyrin IX (DV-Mg-Proto) as substrates. The sequence is that of Divinyl chlorophyllide a 8-vinyl-reductase, chloroplastic (DVR) from Zea mays (Maize).